Consider the following 213-residue polypeptide: Protein-L-isoaspartate O-methyltransferase (213 aa).

S64 is an active-site residue.

It belongs to the methyltransferase superfamily. L-isoaspartyl/D-aspartyl protein methyltransferase family.

Its subcellular location is the cytoplasm. It carries out the reaction [protein]-L-isoaspartate + S-adenosyl-L-methionine = [protein]-L-isoaspartate alpha-methyl ester + S-adenosyl-L-homocysteine. Catalyzes the methyl esterification of L-isoaspartyl residues in peptides and proteins that result from spontaneous decomposition of normal L-aspartyl and L-asparaginyl residues. It plays a role in the repair and/or degradation of damaged proteins. The chain is Protein-L-isoaspartate O-methyltransferase from Flavobacterium johnsoniae (strain ATCC 17061 / DSM 2064 / JCM 8514 / BCRC 14874 / CCUG 350202 / NBRC 14942 / NCIMB 11054 / UW101) (Cytophaga johnsonae).